The primary structure comprises 118 residues: Large ribosomal subunit protein uL18 (118 aa).

A disordered region spans residues 1-26 (MISKPDKNKIRQKRHRRVRGKLSGTA). Positions 10–20 (IRQKRHRRVRG) are enriched in basic residues.

Belongs to the universal ribosomal protein uL18 family. Part of the 50S ribosomal subunit; part of the 5S rRNA/L5/L18/L25 subcomplex. Contacts the 5S and 23S rRNAs.

This is one of the proteins that bind and probably mediate the attachment of the 5S RNA into the large ribosomal subunit, where it forms part of the central protuberance. The chain is Large ribosomal subunit protein uL18 from Streptococcus equi subsp. zooepidemicus (strain H70).